The following is a 420-amino-acid chain: Tyrosine--tRNA ligase (420 aa).

Tyr33 provides a ligand contact to L-tyrosine. The short motif at 38-47 is the 'HIGH' region element; sequence PTADSLHIGH. 2 residues coordinate L-tyrosine: Tyr168 and Gln172. A 'KMSKS' region motif is present at residues 231–235; sequence KFGKT. Position 234 (Lys234) interacts with ATP. The 67-residue stretch at 353–419 folds into the S4 RNA-binding domain; sequence MLLVDALIKV…GKKNYYLVKL (67 aa).

This sequence belongs to the class-I aminoacyl-tRNA synthetase family. TyrS type 1 subfamily. As to quaternary structure, homodimer.

The protein resides in the cytoplasm. It catalyses the reaction tRNA(Tyr) + L-tyrosine + ATP = L-tyrosyl-tRNA(Tyr) + AMP + diphosphate + H(+). In terms of biological role, catalyzes the attachment of tyrosine to tRNA(Tyr) in a two-step reaction: tyrosine is first activated by ATP to form Tyr-AMP and then transferred to the acceptor end of tRNA(Tyr). The chain is Tyrosine--tRNA ligase from Desulfitobacterium hafniense (strain DSM 10664 / DCB-2).